Here is a 178-residue protein sequence, read N- to C-terminus: uncharacterized protein (178 aa).

This is an uncharacterized protein from Bacillus subtilis (strain 168).